The chain runs to 159 residues: Transcription elongation factor GreA (159 aa).

The stretch at 47–73 (AEYDAAREEQSLTEAHIADLENKLSTA) forms a coiled coil.

The protein belongs to the GreA/GreB family.

Functionally, necessary for efficient RNA polymerase transcription elongation past template-encoded arresting sites. The arresting sites in DNA have the property of trapping a certain fraction of elongating RNA polymerases that pass through, resulting in locked ternary complexes. Cleavage of the nascent transcript by cleavage factors such as GreA or GreB allows the resumption of elongation from the new 3'terminus. GreA releases sequences of 2 to 3 nucleotides. The protein is Transcription elongation factor GreA of Chlorobium phaeobacteroides (strain DSM 266 / SMG 266 / 2430).